The sequence spans 1460 residues: Cilia- and flagella-associated protein 43 (1460 aa).

WD repeat units lie at residues 46–87 (EGRY…HLQC), 91–132 (VATV…RLVK), 184–221 (SKGH…MKNY), 303–342 (RRRS…AGHT), 428–468 (IFAC…DSAS), 529–569 (MRDH…MKLP), 589–628 (FGRG…IHYS), 911–951 (EIDP…VTEV), and 1129–1170 (NRRF…CRAV). Coiled coils occupy residues 1170–1214 (VVEA…AEEA) and 1399–1446 (LGEH…LREA).

This sequence belongs to the CFAP43 family.

The protein localises to the cell projection. It is found in the cilium. The protein resides in the flagellum. It localises to the cytoplasm. Its subcellular location is the cytoskeleton. The protein localises to the flagellum axoneme. Functionally, flagellar protein involved in flagellum axoneme organization and function. In Trypanosoma brucei brucei (strain 927/4 GUTat10.1), this protein is Cilia- and flagella-associated protein 43.